Here is a 136-residue protein sequence, read N- to C-terminus: Large ribosomal subunit protein bL21 (136 aa).

The interval Arg-107–Glu-136 is disordered. A compositionally biased stretch (low complexity) spans Ala-121–Glu-136.

It belongs to the bacterial ribosomal protein bL21 family. Part of the 50S ribosomal subunit. Contacts protein L20.

Functionally, this protein binds to 23S rRNA in the presence of protein L20. The polypeptide is Large ribosomal subunit protein bL21 (Acidothermus cellulolyticus (strain ATCC 43068 / DSM 8971 / 11B)).